Here is a 72-residue protein sequence, read N- to C-terminus: Sec-independent protein translocase protein TatA (72 aa).

The helical transmembrane segment at 1–21 (MGSFSIWHWLIVLAVVLLLFG) threads the bilayer. Residues 43–72 (MADEDAKEDPRTIDAKAEEPVKDVKKTTKS) are disordered. Residues 50–72 (EDPRTIDAKAEEPVKDVKKTTKS) are compositionally biased toward basic and acidic residues.

This sequence belongs to the TatA/E family. The Tat system comprises two distinct complexes: a TatABC complex, containing multiple copies of TatA, TatB and TatC subunits, and a separate TatA complex, containing only TatA subunits. Substrates initially bind to the TatABC complex, which probably triggers association of the separate TatA complex to form the active translocon.

Its subcellular location is the cell inner membrane. Part of the twin-arginine translocation (Tat) system that transports large folded proteins containing a characteristic twin-arginine motif in their signal peptide across membranes. TatA could form the protein-conducting channel of the Tat system. The protein is Sec-independent protein translocase protein TatA of Brucella suis biovar 1 (strain 1330).